We begin with the raw amino-acid sequence, 405 residues long: L-rhamnonate dehydratase (405 aa).

Substrate-binding residues include His33 and Arg59. The Mg(2+) site is built by Asp226, Glu252, and Glu280. Residue His329 is the Proton acceptor of the active site. Glu349 provides a ligand contact to substrate.

Belongs to the mandelate racemase/muconate lactonizing enzyme family. RhamD subfamily. As to quaternary structure, homooctamer; tetramer of dimers. Mg(2+) serves as cofactor.

It catalyses the reaction L-rhamnonate = 2-dehydro-3-deoxy-L-rhamnonate + H2O. Its function is as follows. Catalyzes the dehydration of L-rhamnonate to 2-keto-3-deoxy-L-rhamnonate (KDR). The chain is L-rhamnonate dehydratase from Escherichia coli O6:H1 (strain CFT073 / ATCC 700928 / UPEC).